Consider the following 956-residue polypeptide: MAM domain-containing glycosylphosphatidylinositol anchor protein 1 (956 aa).

Residues 1-18 form the signal peptide; sequence MEVTCLLLLALIPFHCRG. Ig-like domains are found at residues 24-123 and 132-230; these read PAQA…KSIR and PVLT…KSIT. N42 carries N-linked (GlcNAc...) asparagine glycosylation. 2 disulfide bridges follow: C60–C108 and C157–C214. 3 N-linked (GlcNAc...) asparagine glycosylation sites follow: N235, N257, and N307. Ig-like domains follow at residues 240-323, 338-432, 440-534, and 539-632; these read PTLK…KTVN, PDMI…VEVN, PTIS…VQLT, and PEVE…FQVS. Disulfide bonds link C262–C308, C357–C415, C463–C514, and C560–C616. One can recognise a Fibronectin type-III domain in the interval 644–744; it reads TPNPTRSHKL…SRVIHYTEPI (101 aa). The MAM domain maps to 752-919; it reads NTCHFEDEKI…VTLKKGECPR (168 aa). Over residues 780–789 the composition is skewed to polar residues; it reads LTQNPKRSPN. The tract at residues 780-799 is disordered; the sequence is LTQNPKRSPNTGPPTDISGT. S933 carries the GPI-anchor amidated serine lipid modification. A propeptide spans 934–956 (removed in mature form); that stretch reads GAPRLSSLQLWGSMTIFLLALQR.

As to quaternary structure, interacts heterophilically through its MAM domain with proteins in axon-rich regions and through its Ig-like domains with proteins in differentiating muscle. Interacts (through the Ig-like domains) with NLGN2. In terms of tissue distribution, high levels detected in developing central and peripheral nervous systems with little expression elsewhere. In brain, highest levels in cerebral cortex and hindbrain at E15. At postnatal day 1, highest levels in basilar pons and superficial layers of the neocortex. In the developing spinal cord, restricted to a subpopulation of neurons in the dorsal and spinal ventral cord, probably D1 interneurons. Expressed in brain.

Its subcellular location is the cell membrane. Functionally, required for radial migration of cortical neurons in the superficial layer of the neocortex. Plays a role in the formation or maintenance of inhibitory synapses. May function by inhibiting the activity of NLGN2. The chain is MAM domain-containing glycosylphosphatidylinositol anchor protein 1 (Mdga1) from Rattus norvegicus (Rat).